Here is a 104-residue protein sequence, read N- to C-terminus: Protein enhancer of rudimentary (104 aa).

Residue Thr18 is modified to Phosphothreonine; by CK2. Phosphoserine; by CK2 is present on Ser24.

This sequence belongs to the E(R) family.

Functionally, acts as an enhancer of the rudimentary gene. Has a role in pyrimidine biosynthesis and the cell cycle. The sequence is that of Protein enhancer of rudimentary (e(r)) from Drosophila virilis (Fruit fly).